Consider the following 153-residue polypeptide: Transcriptional regulator MraZ (153 aa).

SpoVT-AbrB domains lie at 7–61 and 90–133; these read KEKH…LPDV and LEMV…EPGR.

The protein belongs to the MraZ family. In terms of assembly, forms oligomers.

It localises to the cytoplasm. It is found in the nucleoid. This is Transcriptional regulator MraZ from Chlorobium luteolum (strain DSM 273 / BCRC 81028 / 2530) (Pelodictyon luteolum).